The chain runs to 218 residues: Mitochondrial fission factor (218 aa).

Topologically, residues 1-198 are cytoplasmic; the sequence is MAEISRIQYE…ENKERAKREM (198 aa). At T89 the chain carries Phosphothreonine. 4 positions are modified to phosphoserine: S129, S131, S146, and S171. Residues 167-198 are a coiled coil; the sequence is VDAASLRRQIIKLNRRLQLLEEENKERAKREM. Residues 199–216 form a helical; Anchor for type IV membrane protein membrane-spanning segment; sequence VMYSITVAFWLLNSWLWF. Topologically, residues 217–218 are mitochondrial intermembrane; the sequence is RR.

The protein belongs to the Tango11 family. In terms of assembly, homodimer. Interacts with DNM1L. Interacts with C11orf65/MFI; the interaction inhibits MFF interaction with DNM1L.

It localises to the mitochondrion outer membrane. Its subcellular location is the peroxisome. The protein resides in the cytoplasmic vesicle. The protein localises to the secretory vesicle. It is found in the synaptic vesicle. In terms of biological role, plays a role in mitochondrial and peroxisomal fission. Promotes the recruitment and association of the fission mediator dynamin-related protein 1 (DNM1L) to the mitochondrial surface. May be involved in regulation of synaptic vesicle membrane dynamics by recruitment of DNM1L to clathrin-containing vesicles. This Pongo abelii (Sumatran orangutan) protein is Mitochondrial fission factor (MFF).